Consider the following 209-residue polypeptide: Cyclin-dependent kinase inhibitor 2 (209 aa).

The required for nuclear localization stretch occupies residues 1–32; that stretch reads MAAVRRRERDVVEENGVTTTTVKRRKMEEEVD.

Belongs to the CDI family. ICK/KRP subfamily. In terms of assembly, specifically interacts with CDKA-1, but not with CDKB1-1. Post-translationally, phosphorylated.

The protein localises to the nucleus. The protein resides in the nucleoplasm. In terms of biological role, binds and inhibits CYCD2-1/CDKA-1 complex kinase activity. Regulates cell division which is crucial for plant growth, development and morphogenesis. May regulate early lateral root initiation by blocking the G1/S phase transition. Controls the mitosis-to-endocycle transition and the onset of the endoreduplication cycle during leaf development through inhibition of mitotic CDKA-1 kinase complexes. Specifically targets CDKA-1. The chain is Cyclin-dependent kinase inhibitor 2 (KRP2) from Arabidopsis thaliana (Mouse-ear cress).